The following is a 117-amino-acid chain: Reprimo-like protein (117 aa).

The chain crosses the membrane as a helical span at residues 64 to 84; the sequence is VAQIAVLCVLSLTVVFGVFFL. The residue at position 106 (Ser106) is a Phosphoserine.

This sequence belongs to the reprimo family.

Its subcellular location is the membrane. This Mus musculus (Mouse) protein is Reprimo-like protein (Rprml).